A 336-amino-acid polypeptide reads, in one-letter code: N-acetyl-gamma-glutamyl-phosphate reductase (336 aa).

The active site involves Cys-143.

It belongs to the NAGSA dehydrogenase family. Type 1 subfamily.

The protein localises to the cytoplasm. The enzyme catalyses N-acetyl-L-glutamate 5-semialdehyde + phosphate + NADP(+) = N-acetyl-L-glutamyl 5-phosphate + NADPH + H(+). It participates in amino-acid biosynthesis; L-arginine biosynthesis; N(2)-acetyl-L-ornithine from L-glutamate: step 3/4. Its function is as follows. Catalyzes the NADPH-dependent reduction of N-acetyl-5-glutamyl phosphate to yield N-acetyl-L-glutamate 5-semialdehyde. This chain is N-acetyl-gamma-glutamyl-phosphate reductase, found in Dictyoglomus thermophilum (strain ATCC 35947 / DSM 3960 / H-6-12).